We begin with the raw amino-acid sequence, 597 residues long: UvrABC system protein C (597 aa).

The GIY-YIG domain maps to 14–91 (KKPGCYLWKD…INQYQPRFNL (78 aa)).

This sequence belongs to the UvrC family. As to quaternary structure, interacts with UvrB in an incision complex.

It localises to the cytoplasm. Functionally, the UvrABC repair system catalyzes the recognition and processing of DNA lesions. UvrC both incises the 5' and 3' sides of the lesion. The N-terminal half is responsible for the 3' incision and the C-terminal half is responsible for the 5' incision. This chain is UvrABC system protein C, found in Mycoplasma genitalium (strain ATCC 33530 / DSM 19775 / NCTC 10195 / G37) (Mycoplasmoides genitalium).